The chain runs to 806 residues: Phenylalanine--tRNA ligase beta subunit (806 aa).

The tRNA-binding domain maps to 44–158 (ADGLSKLVVG…EEAVPGDAIF (115 aa)). One can recognise a B5 domain in the interval 411 to 486 (TEPVEVSTSL…RIYGYDKLPT (76 aa)). The Mg(2+) site is built by Asp464, Asp470, Glu473, and Glu474. An FDX-ACB domain is found at 713–806 (TKFPAMTRDV…LTEQVGAEVR (94 aa)).

This sequence belongs to the phenylalanyl-tRNA synthetase beta subunit family. Type 1 subfamily. Tetramer of two alpha and two beta subunits. It depends on Mg(2+) as a cofactor.

The protein localises to the cytoplasm. The catalysed reaction is tRNA(Phe) + L-phenylalanine + ATP = L-phenylalanyl-tRNA(Phe) + AMP + diphosphate + H(+). This Streptococcus pyogenes serotype M28 (strain MGAS6180) protein is Phenylalanine--tRNA ligase beta subunit.